The following is a 279-amino-acid chain: Nitrogenase vanadium-iron protein alpha chain (279 aa).

C5, C31, and C94 together coordinate [8Fe-7S] cluster. C213 contacts [7Fe-V-9S-C-homocitryl] cluster.

The protein belongs to the NifD/NifK/NifE/NifN family. As to quaternary structure, hexamer of two alpha, two beta, and two delta chains. [8Fe-7S] cluster is required as a cofactor. [7Fe-V-9S-C-homocitryl] cluster serves as cofactor.

It carries out the reaction N2 + 8 reduced [2Fe-2S]-[ferredoxin] + 16 ATP + 16 H2O = H2 + 8 oxidized [2Fe-2S]-[ferredoxin] + 2 NH4(+) + 16 ADP + 16 phosphate + 6 H(+). In terms of biological role, this vanadium-iron protein is part of the nitrogenase complex that catalyzes the key enzymatic reactions in nitrogen fixation. The polypeptide is Nitrogenase vanadium-iron protein alpha chain (vnfD) (Azotobacter salinestris).